A 354-amino-acid chain; its full sequence is Phosphate acyltransferase (354 aa).

It belongs to the PlsX family. As to quaternary structure, homodimer. Probably interacts with PlsY.

It localises to the cytoplasm. It catalyses the reaction a fatty acyl-[ACP] + phosphate = an acyl phosphate + holo-[ACP]. It participates in lipid metabolism; phospholipid metabolism. In terms of biological role, catalyzes the reversible formation of acyl-phosphate (acyl-PO(4)) from acyl-[acyl-carrier-protein] (acyl-ACP). This enzyme utilizes acyl-ACP as fatty acyl donor, but not acyl-CoA. This is Phosphate acyltransferase from Nitrobacter hamburgensis (strain DSM 10229 / NCIMB 13809 / X14).